The chain runs to 401 residues: Dual-specificity RNA methyltransferase RlmN (401 aa).

The active-site Proton acceptor is Glu-114. Residues Asp-120–Asp-365 enclose the Radical SAM core domain. A disulfide bridge connects residues Cys-127 and Cys-370. 3 residues coordinate [4Fe-4S] cluster: Cys-134, Cys-138, and Cys-141. Residues Gly-187 to Glu-188, Ser-219, Ser-241 to His-243, and Asn-327 each bind S-adenosyl-L-methionine. Cys-370 functions as the S-methylcysteine intermediate in the catalytic mechanism.

The protein belongs to the radical SAM superfamily. RlmN family. [4Fe-4S] cluster is required as a cofactor.

The protein resides in the cytoplasm. It carries out the reaction adenosine(2503) in 23S rRNA + 2 reduced [2Fe-2S]-[ferredoxin] + 2 S-adenosyl-L-methionine = 2-methyladenosine(2503) in 23S rRNA + 5'-deoxyadenosine + L-methionine + 2 oxidized [2Fe-2S]-[ferredoxin] + S-adenosyl-L-homocysteine. The catalysed reaction is adenosine(37) in tRNA + 2 reduced [2Fe-2S]-[ferredoxin] + 2 S-adenosyl-L-methionine = 2-methyladenosine(37) in tRNA + 5'-deoxyadenosine + L-methionine + 2 oxidized [2Fe-2S]-[ferredoxin] + S-adenosyl-L-homocysteine. Specifically methylates position 2 of adenine 2503 in 23S rRNA and position 2 of adenine 37 in tRNAs. m2A2503 modification seems to play a crucial role in the proofreading step occurring at the peptidyl transferase center and thus would serve to optimize ribosomal fidelity. The polypeptide is Dual-specificity RNA methyltransferase RlmN (Xanthomonas oryzae pv. oryzae (strain MAFF 311018)).